The primary structure comprises 376 residues: Queuine tRNA-ribosyltransferase (376 aa).

The active-site Proton acceptor is the Asp93. Residues Asp93–Phe97, Asp147, Gln190, and Gly217 contribute to the substrate site. Residues Gly248–Asp254 form an RNA binding region. Asp267 acts as the Nucleophile in catalysis. Residues Cys305, Cys307, Cys310, and His336 each contribute to the Zn(2+) site.

This sequence belongs to the queuine tRNA-ribosyltransferase family. Homodimer. Within each dimer, one monomer is responsible for RNA recognition and catalysis, while the other monomer binds to the replacement base PreQ1. Zn(2+) is required as a cofactor.

The catalysed reaction is 7-aminomethyl-7-carbaguanine + guanosine(34) in tRNA = 7-aminomethyl-7-carbaguanosine(34) in tRNA + guanine. Its pathway is tRNA modification; tRNA-queuosine biosynthesis. In terms of biological role, catalyzes the base-exchange of a guanine (G) residue with the queuine precursor 7-aminomethyl-7-deazaguanine (PreQ1) at position 34 (anticodon wobble position) in tRNAs with GU(N) anticodons (tRNA-Asp, -Asn, -His and -Tyr). Catalysis occurs through a double-displacement mechanism. The nucleophile active site attacks the C1' of nucleotide 34 to detach the guanine base from the RNA, forming a covalent enzyme-RNA intermediate. The proton acceptor active site deprotonates the incoming PreQ1, allowing a nucleophilic attack on the C1' of the ribose to form the product. After dissociation, two additional enzymatic reactions on the tRNA convert PreQ1 to queuine (Q), resulting in the hypermodified nucleoside queuosine (7-(((4,5-cis-dihydroxy-2-cyclopenten-1-yl)amino)methyl)-7-deazaguanosine). This is Queuine tRNA-ribosyltransferase from Cereibacter sphaeroides (strain ATCC 17029 / ATH 2.4.9) (Rhodobacter sphaeroides).